Reading from the N-terminus, the 367-residue chain is Probable butyrate kinase (367 aa).

This sequence belongs to the acetokinase family.

It is found in the cytoplasm. It catalyses the reaction butanoate + ATP = butanoyl phosphate + ADP. This is Probable butyrate kinase from Bacillus cereus (strain G9842).